A 151-amino-acid polypeptide reads, in one-letter code: Natriuretic peptides A (151 aa).

Positions 1 to 25 (MSSFSTTTVSFLLLLAFQLLGQTRA) are cleaved as a signal peptide. A disordered region spans residues 62–105 (VLSEPNEEAGAALSPLPEVPPWTGEVSPAQRDGGALGRGPWDSS). Positions 93–103 (DGGALGRGPWD) are excised as a propeptide. Position 129 is a phosphoserine (S129). A disulfide bond links C130 and C146. The interval 147-151 (NSFRY) is important for degradation of atrial natriuretic peptide by IDE.

This sequence belongs to the natriuretic peptide family. In terms of assembly, homodimer; disulfide-linked antiparallel dimer. Post-translationally, the precursor molecule is proteolytically cleaved by CORIN at Arg-123 to produce atrial natriuretic peptide. Undergoes further proteolytic cleavage by unknown proteases to give rise to long-acting natriuretic peptide, vessel dilator and kaliuretic peptide. Additional processing gives rise to the auriculin and atriopeptin peptides. In the kidneys, alternative processing by an unknown protease results in the peptide urodilatin. In terms of processing, cleavage by MME initiates degradation of the factor and thereby regulates its activity. Degraded by IDE (in vitro). During IDE degradation, the resulting products can temporarily stimulate NPR2 to produce cGMP, before the fragments are completely degraded and inactivated by IDE (in vitro). Degraded by IDE. Post-translationally, phosphorylation on Ser-129 decreases vasorelaxant activity. Detected in the kidney distal tubular cells (at protein level). Present in urine (at protein level). In terms of tissue distribution, detected in atrial and ventricular plasma samples, and in adipocytes (at protein level). Detected in urine in one study. However, was not detected in urine in another study. In the brain, predominantly expressed in the gray matter with very weak expression in the white matter (at protein level). Localizes to astrocyte-like structures throughout the white matter, and in the cerebral vessels detected in the leptomeningeal and parenchymal vessels, and endothelium and smooth muscle layers (at protein level). Relatively low levels of expression in the kidneys compared to urodilatin (at protein level).

The protein localises to the secreted. The protein resides in the perikaryon. It is found in the cell projection. Hormone that plays a key role in mediating cardio-renal homeostasis, and is involved in vascular remodeling and regulating energy metabolism. Acts by specifically binding and stimulating NPR1 to produce cGMP, which in turn activates effector proteins, such as PRKG1, that drive various biological responses. Regulates vasodilation, natriuresis, diuresis and aldosterone synthesis and is therefore essential for regulating blood pressure, controlling the extracellular fluid volume and maintaining the fluid-electrolyte balance. Also involved in inhibiting cardiac remodeling and cardiac hypertrophy by inducing cardiomyocyte apoptosis and attenuating the growth of cardiomyocytes and fibroblasts. Plays a role in female pregnancy by promoting trophoblast invasion and spiral artery remodeling in uterus, and thus prevents pregnancy-induced hypertension. In adipose tissue, acts in various cGMP- and PKG-dependent pathways to regulate lipid metabolism and energy homeostasis. This includes up-regulating lipid metabolism and mitochondrial oxygen utilization by activating the AMP-activated protein kinase (AMPK), and increasing energy expenditure by acting via MAPK11 to promote the UCP1-dependent thermogenesis of brown adipose tissue. Binds the clearance receptor NPR3 which removes the hormone from circulation. In terms of biological role, may have a role in cardio-renal homeostasis through regulation of natriuresis, diuresis, vasodilation, and inhibiting aldosterone synthesis. In vitro, promotes the production of cGMP and induces vasodilation. May promote natriuresis, at least in part, by enhancing prostaglandin E2 synthesis resulting in the inhibition of renal Na+-K+-ATPase. However reports on the involvement of this peptide in mammal blood volume and blood pressure homeostasis are conflicting; according to a report, in vivo it is not sufficient to activate cGMP and does not inhibit collecting duct transport nor effect diuresis and natriuresis. Appears to bind to specific receptors that are distinct from the receptors bound by atrial natriuretic peptide and vessel dilator. Possibly enhances protein excretion in urine by decreasing proximal tubular protein reabsorption. Its function is as follows. May have a role in cardio-renal homeostasis through regulation of natriuresis, diuresis, and vasodilation. In vitro, promotes the production of cGMP and induces vasodilation. May promote natriuresis, at least in part, by enhancing prostaglandin E2 synthesis resulting in the inhibition of renal Na+-K+-ATPase. However reports on the involvement of this peptide in mammal blood volume and blood pressure homeostasis are conflicting; according to a report it is not sufficient to activate cGMP and does not inhibit collecting duct transport nor effect diuresis and natriuresis. Appears to bind to specific receptors that are distinct from the receptors bound by the atrial natriuretic and long-acting natriuretic peptides. Possibly functions in protein excretion in urine by maintaining the integrity of the proximal tubules and enhancing protein excretion by decreasing proximal tubular protein reabsorption. Functionally, may have a role in cardio-renal homeostasis through regulation of diuresis and inhibiting aldosterone synthesis. In vitro, promotes the production of cGMP and induces vasodilation. May promote natriuresis, at least in part, by enhancing prostaglandin E2 synthesis resulting in the inhibition of renal Na+-K+-ATPase. May have a role in potassium excretion but not sodium excretion (natriuresis). Possibly enhances protein excretion in urine by decreasing proximal tubular protein reabsorption. Hormone produced in the kidneys that appears to be important for maintaining cardio-renal homeostasis. Mediates vasodilation, natriuresis and diuresis primarily in the renal system, in order to maintain the extracellular fluid volume and control the fluid-electrolyte balance. Specifically binds and stimulates cGMP production by renal transmembrane receptors, likely NPR1. Urodilatin not ANP, may be the natriuretic peptide responsible for the regulation of sodium and water homeostasis in the kidney. In terms of biological role, may have a role in cardio-renal homeostasis through regulation of natriuresis and vasodilation. In vivo promotes natriuresis and in vitro, vasodilates renal artery strips. Its function is as follows. May have a role in cardio-renal homeostasis through regulation of regulation of natriuresis and vasodilation. In vivo promotes natriuresis. In vitro, vasodilates intestinal smooth muscle but not smooth muscle strips. Functionally, may have a role in cardio-renal homeostasis through regulation of natriuresis and vasodilation. In vivo promotes natriuresis. In vitro, selectively vasodilates intestinal and vascular smooth muscle strips. May have a role in cardio-renal homeostasis through regulation of natriuresis and vasodilation. In vivo promotes natriuresis. In vitro, selectively vasodilates intestinal smooth muscle but not vascular smooth muscle strips. This is Natriuretic peptides A (NPPA) from Homo sapiens (Human).